The primary structure comprises 153 residues: Pheromone-binding protein Gp-9 (153 aa).

The first 19 residues, 1-19 (MKTFVLHIFIFAFVAFASA), serve as a signal peptide directing secretion. Cystine bridges form between Cys37–Cys77, Cys73–Cys129, and Cys118–Cys138.

This sequence belongs to the PBP/GOBP family. In terms of assembly, homodimer.

It localises to the secreted. In terms of biological role, colony queen number, a major feature of social organization, is associated with worker genotype for Gp-9. Colonies are headed by either a single reproductive queen (monogyne form) or multiple queens (polygyne form). Differences in worker Gp-9 genotypes between social forms may cause differences in workers' abilities to recognize queens and regulate their numbers. The sequence is that of Pheromone-binding protein Gp-9 from Solenopsis amblychila (Desert fire ant).